A 330-amino-acid chain; its full sequence is G-protein coupled bile acid receptor 1 (330 aa).

Residues Met1–Gly19 lie on the Extracellular side of the membrane. The N-linked (GlcNAc...) asparagine glycan is linked to Asn4. Residues Leu20–Ala40 form a helical membrane-spanning segment. Topologically, residues Trp41–Ala50 are cytoplasmic. The helical transmembrane segment at Gly51 to Leu71 threads the bilayer. At Pro72 to Cys85 the chain is on the extracellular side. Residue Asn76 is glycosylated (N-linked (GlcNAc...) asparagine). Residues Cys85 and Cys155 are joined by a disulfide bond. A helical transmembrane segment spans residues Leu86–Val106. Topologically, residues His107–Arg125 are cytoplasmic. The helical transmembrane segment at Leu126 to Trp146 threads the bilayer. The Extracellular portion of the chain corresponds to Asn147–Tyr165. The helical transmembrane segment at Leu166–Val186 threads the bilayer. The Cytoplasmic portion of the chain corresponds to Arg187–Gly228. Residues Ala229–Leu249 traverse the membrane as a helical segment. The Extracellular portion of the chain corresponds to Ala250 to Thr261. Residues Leu262–Leu282 traverse the membrane as a helical segment. Residues Gly283 to Asn330 lie on the Cytoplasmic side of the membrane. The interval Asp309–Asn330 is disordered. The span at Pro319 to Asn330 shows a compositional bias: polar residues.

This sequence belongs to the G-protein coupled receptor 1 family. In terms of tissue distribution, ubiquitously expressed. Expressed at higher level in spleen and placenta. Expressed at lower level in other tissues. In digestive tissues, it is expressed in stomach, duodenum, ileocecum, ileum, jejunum, ascending colon, transverse colon, descending colon, cecum and liver, but not in esophagus and rectum.

Its subcellular location is the cell membrane. Receptor for bile acid. Bile acid-binding induces its internalization, activation of extracellular signal-regulated kinase and intracellular cAMP production. May be involved in the suppression of macrophage functions by bile acids. The chain is G-protein coupled bile acid receptor 1 (GPBAR1) from Homo sapiens (Human).